The chain runs to 274 residues: Dermonecrotic toxin SdSicTox-betaIIB1bxiii (274 aa).

H5 is a catalytic residue. Mg(2+)-binding residues include E25 and D27. H41 serves as the catalytic Nucleophile. Disulfide bonds link C45/C51 and C47/C190. Residue D85 participates in Mg(2+) binding.

The protein belongs to the arthropod phospholipase D family. Class II subfamily. The cofactor is Mg(2+). Expressed by the venom gland.

The protein localises to the secreted. The enzyme catalyses an N-(acyl)-sphingosylphosphocholine = an N-(acyl)-sphingosyl-1,3-cyclic phosphate + choline. It carries out the reaction an N-(acyl)-sphingosylphosphoethanolamine = an N-(acyl)-sphingosyl-1,3-cyclic phosphate + ethanolamine. The catalysed reaction is a 1-acyl-sn-glycero-3-phosphocholine = a 1-acyl-sn-glycero-2,3-cyclic phosphate + choline. It catalyses the reaction a 1-acyl-sn-glycero-3-phosphoethanolamine = a 1-acyl-sn-glycero-2,3-cyclic phosphate + ethanolamine. Its function is as follows. Dermonecrotic toxins cleave the phosphodiester linkage between the phosphate and headgroup of certain phospholipids (sphingolipid and lysolipid substrates), forming an alcohol (often choline) and a cyclic phosphate. This toxin acts on sphingomyelin (SM). It may also act on ceramide phosphoethanolamine (CPE), lysophosphatidylcholine (LPC) and lysophosphatidylethanolamine (LPE), but not on lysophosphatidylserine (LPS), and lysophosphatidylglycerol (LPG). It acts by transphosphatidylation, releasing exclusively cyclic phosphate products as second products. Induces dermonecrosis, hemolysis, increased vascular permeability, edema, inflammatory response, and platelet aggregation. This is Dermonecrotic toxin SdSicTox-betaIIB1bxiii from Sicarius cf. damarensis (strain GJB-2008) (Six-eyed sand spider).